The chain runs to 101 residues: NADH-quinone oxidoreductase subunit K (101 aa).

Transmembrane regions (helical) follow at residues 4–24 (LEHY…GIFL), 30–50 (IVIL…LVAF), and 65–85 (FVLT…VTFF).

The protein belongs to the complex I subunit 4L family. In terms of assembly, NDH-1 is composed of 14 different subunits. Subunits NuoA, H, J, K, L, M, N constitute the membrane sector of the complex.

It localises to the cell inner membrane. The catalysed reaction is a quinone + NADH + 5 H(+)(in) = a quinol + NAD(+) + 4 H(+)(out). In terms of biological role, NDH-1 shuttles electrons from NADH, via FMN and iron-sulfur (Fe-S) centers, to quinones in the respiratory chain. The immediate electron acceptor for the enzyme in this species is believed to be ubiquinone. Couples the redox reaction to proton translocation (for every two electrons transferred, four hydrogen ions are translocated across the cytoplasmic membrane), and thus conserves the redox energy in a proton gradient. In Cereibacter sphaeroides (strain ATCC 17029 / ATH 2.4.9) (Rhodobacter sphaeroides), this protein is NADH-quinone oxidoreductase subunit K.